The chain runs to 260 residues: Putative ATP-binding protein BAB2_1147 (260 aa).

Positions 5-228 (ISFNNVVMRY…DLPYPRTEAI (224 aa)) constitute an ABC transporter domain. Residue 37 to 44 (GPSGCGKS) coordinates ATP.

It belongs to the ABC transporter superfamily. The complex is composed of two ATP-binding proteins (BAB2_1147), two transmembrane proteins (BAB2_1148) and a solute-binding protein (BAB2_1146).

Its subcellular location is the cell inner membrane. In terms of biological role, probably part of an ABC transporter complex. Probably Responsible for energy coupling to the transport system. The sequence is that of Putative ATP-binding protein BAB2_1147 from Brucella abortus (strain 2308).